Reading from the N-terminus, the 160-residue chain is Protein cornichon homolog 2 (160 aa).

Residues 1–10 (MAFTFAAFCY) lie on the Cytoplasmic side of the membrane. Residues 11-31 (MLTLVLCASLIFFVIWHIIAF) form a helical membrane-spanning segment. The Lumenal segment spans residues 32-72 (DELRTDFKNPIDQGNPARARERLKNIERICCLLRKLVVPEY). Residues 73 to 93 (CIHGLFCLMFLCAAEWVTLGL) form a helical membrane-spanning segment. Over 94–138 (NLPLLLYHLWRYFHRPSDGSEGLFDAVSIMDADILGYCQKEAWCK) the chain is Cytoplasmic. The helical transmembrane segment at 139-159 (LAFYLLSFFYYLYSMVYTLVS) threads the bilayer. Position 160 (Phe160) is a topological domain, lumenal.

This sequence belongs to the cornichon family. As to quaternary structure, interacts with HBEGF. Expressed in the odd-numbered neuromeres (r3 and r5) of the developing hindbrain.

It localises to the membrane. Regulates the trafficking and gating properties of AMPA-selective glutamate receptors (AMPARs). Plays an important role in the proper development of cranial nerves by facilitating the secretion of HBEGF. This Gallus gallus (Chicken) protein is Protein cornichon homolog 2 (CNIH2).